A 312-amino-acid chain; its full sequence is Zinc transporter ZitB (312 aa).

A run of 5 helical transmembrane segments spans residues 21-41, 48-68, 90-110, 123-143, and 164-184; these read LLFA…GGIL, LADA…LLAV, AAFV…WEAI, LMMV…WILH, and LLGS…GWTP.

This sequence belongs to the cation diffusion facilitator (CDF) transporter (TC 2.A.4) family. SLC30A subfamily.

Its subcellular location is the cell inner membrane. Its function is as follows. Involved in zinc efflux across the cytoplasmic membrane, thus reducing zinc accumulation in the cytoplasm and rendering bacteria more resistant to zinc. It may contribute to zinc homeostasis at low concentrations of zinc. This is Zinc transporter ZitB from Salmonella typhimurium (strain LT2 / SGSC1412 / ATCC 700720).